The following is a 353-amino-acid chain: Survival factor 2 (353 aa).

It belongs to the SVF1 family.

It localises to the cytoplasm. The protein localises to the nucleus. This is Survival factor 2 (svf2) from Schizosaccharomyces pombe (strain 972 / ATCC 24843) (Fission yeast).